Consider the following 357-residue polypeptide: Sulfate/thiosulfate import ATP-binding protein CysA (357 aa).

One can recognise an ABC transporter domain in the interval 3–237; it reads ITIQNLNKHF…PENAFVTEFL (235 aa). An ATP-binding site is contributed by 35–42; the sequence is GPSGCGKT.

It belongs to the ABC transporter superfamily. Sulfate/tungstate importer (TC 3.A.1.6) family. As to quaternary structure, the complex is composed of two ATP-binding proteins (CysA), two transmembrane proteins (CysT and CysW) and a solute-binding protein (CysP).

It is found in the cell inner membrane. The enzyme catalyses sulfate(out) + ATP + H2O = sulfate(in) + ADP + phosphate + H(+). The catalysed reaction is thiosulfate(out) + ATP + H2O = thiosulfate(in) + ADP + phosphate + H(+). In terms of biological role, part of the ABC transporter complex CysAWTP involved in sulfate/thiosulfate import. Responsible for energy coupling to the transport system. The sequence is that of Sulfate/thiosulfate import ATP-binding protein CysA from Neisseria meningitidis serogroup B (strain ATCC BAA-335 / MC58).